The chain runs to 153 residues: Ribosome maturation factor RimP (153 aa).

This sequence belongs to the RimP family.

Its subcellular location is the cytoplasm. In terms of biological role, required for maturation of 30S ribosomal subunits. The sequence is that of Ribosome maturation factor RimP from Pelotomaculum thermopropionicum (strain DSM 13744 / JCM 10971 / SI).